Consider the following 230-residue polypeptide: MASNSAFSLFLILLIITQCLSVLNAAKDFDFFYFVQQWPGSYCDTKQSCCYPTTGKPAADFGIHGLWPNNNDGTYPSNCDPNSPYDQSQISDLISSMQQNWPTLACPSGSGSTFWSHEWEKHGTCAESVLTNQHAYFKKALDLKNQIDLLSILQGADIHPDGESYDLVNIRNAIKSAIGYTPWIQCNVDQSGNSQLYQVYICVDGSGSSLIECPIFPGGKCGTSIEFPTF.

The first 25 residues, 1–25 (MASNSAFSLFLILLIITQCLSVLNA), serve as a signal peptide directing secretion. Gln37 contacts RNA. 5 disulfides stabilise this stretch: Cys43-Cys49, Cys50-Cys106, Cys79-Cys125, Cys186-Cys221, and Cys202-Cys213. Residues His64, Phe114, 117–118 (HE), and 121–122 (KH) contribute to the RNA site. The active-site Proton donor is the His64. Glu118 is an active-site residue. His122 serves as the catalytic Proton acceptor.

The protein belongs to the RNase T2 family.

Its subcellular location is the secreted. The protein resides in the extracellular space. It localises to the cell wall. The enzyme catalyses a ribonucleotidyl-ribonucleotide-RNA + H2O = a 3'-end 3'-phospho-ribonucleotide-RNA + a 5'-end dephospho-ribonucleoside-RNA + H(+). Its function is as follows. Probably involved in plant phosphate-starvation rescue system. The protein is Extracellular ribonuclease LE of Solanum lycopersicum (Tomato).